Reading from the N-terminus, the 192-residue chain is Holliday junction branch migration complex subunit RuvA (192 aa).

A domain I region spans residues 1 to 61; sequence MFEYLKGIVA…DTGITLYGFL (61 aa). The domain II stretch occupies residues 62 to 137; the sequence is SLEDKELFLK…KLGDYVKKSA (76 aa). The tract at residues 137–140 is flexible linker; it reads AVAT. The interval 141 to 192 is domain III; the sequence is DLTPSLQDALLALVALGYTQKEVDRITPKLAKLPENTADGYIKEALALLLKK.

The protein belongs to the RuvA family. As to quaternary structure, homotetramer. Forms an RuvA(8)-RuvB(12)-Holliday junction (HJ) complex. HJ DNA is sandwiched between 2 RuvA tetramers; dsDNA enters through RuvA and exits via RuvB. An RuvB hexamer assembles on each DNA strand where it exits the tetramer. Each RuvB hexamer is contacted by two RuvA subunits (via domain III) on 2 adjacent RuvB subunits; this complex drives branch migration. In the full resolvosome a probable DNA-RuvA(4)-RuvB(12)-RuvC(2) complex forms which resolves the HJ.

The protein localises to the cytoplasm. The RuvA-RuvB-RuvC complex processes Holliday junction (HJ) DNA during genetic recombination and DNA repair, while the RuvA-RuvB complex plays an important role in the rescue of blocked DNA replication forks via replication fork reversal (RFR). RuvA specifically binds to HJ cruciform DNA, conferring on it an open structure. The RuvB hexamer acts as an ATP-dependent pump, pulling dsDNA into and through the RuvAB complex. HJ branch migration allows RuvC to scan DNA until it finds its consensus sequence, where it cleaves and resolves the cruciform DNA. The protein is Holliday junction branch migration complex subunit RuvA of Lactobacillus gasseri (strain ATCC 33323 / DSM 20243 / BCRC 14619 / CIP 102991 / JCM 1131 / KCTC 3163 / NCIMB 11718 / NCTC 13722 / AM63).